The chain runs to 389 residues: Flavin-dependent monooxygenase (389 aa).

FAD is bound by residues 12–15 (AGVA), 34–35 (EK), Gln-44, Arg-105, Tyr-267, and Asp-289.

This sequence belongs to the aromatic-ring hydroxylase family. FAD is required as a cofactor.

It catalyses the reaction a tetracycline + NADPH + O2 + H(+) = a (1S,10aS)-3-(CONH2)-1-(Me2N)-3,3a,4,6-(HO)4-2,5-dioxo-1H,10aH,11H,11aH-cyclopenta[b]anthracene + CO + NADP(+) + H2O. The enzyme catalyses 7-chlorotetracycline + NADPH + O2 + H(+) = (1S,10S,10aS)-3-(CONH2)-9-Cl-1-(Me2N)-3,3a,4,10-(HO)4-10-Me-2,5-dioxo-1H,10aH,11H,11aH-cyclopenta[b]anthracen-6-olate + CO + NADP(+) + H2O. Inhibited by anhydrotetracycline. Functionally, an FAD-requiring monooxygenase active on tetracycline antibiotic and some of its derivatives, which leads to their inactivation. Expression in E.coli confers high resistance to tetracycline and oxytetracycline, does not confer resistance to minocycline or tigecycline. The reaction requires NADPH. Expression in L.pneumophila confers resistance to tetracycline. Degrades and confers resistance to tetracycline and chlortetracycline. This Legionella longbeachae serogroup 1 (strain NSW150) protein is Flavin-dependent monooxygenase (tet(56)).